The chain runs to 469 residues: Glutamine synthetase (469 aa).

In terms of domain architecture, GS beta-grasp spans 14 to 99; the sequence is NDVKFVDLRF…VCDILDPVSG (86 aa). The region spanning 106–469 is the GS catalytic domain; sequence RRGTAKKAEA…PVEYDMYYSA (364 aa). Glu-131 and Glu-133 together coordinate Mg(2+). Glu-209 lines the ATP pocket. The Mg(2+) site is built by Glu-214 and Asp-221. L-glutamate is bound by residues 265-266 and Gly-266; that span reads NG. His-270 lines the Mg(2+) pocket. Residues 272–274 and Ser-274 each bind ATP; that span reads HQS. 3 residues coordinate L-glutamate: Arg-322, Glu-328, and Arg-340. Residues Arg-340, Arg-345, and Lys-353 each contribute to the ATP site. A Mg(2+)-binding site is contributed by Glu-358. Arg-360 provides a ligand contact to L-glutamate. O-AMP-tyrosine is present on Tyr-398.

It belongs to the glutamine synthetase family. As to quaternary structure, oligomer of 12 subunits arranged in the form of two hexameric ring. Mg(2+) serves as cofactor.

It is found in the cytoplasm. The catalysed reaction is L-glutamate + NH4(+) + ATP = L-glutamine + ADP + phosphate + H(+). The activity of this enzyme could be controlled by adenylation under conditions of abundant glutamine. Catalyzes the ATP-dependent biosynthesis of glutamine from glutamate and ammonia. This chain is Glutamine synthetase, found in Rhizobium leguminosarum bv. viciae.